The chain runs to 239 residues: tRNA (guanine-N(1)-)-methyltransferase (239 aa).

S-adenosyl-L-methionine contacts are provided by residues glycine 109 and 133-138 (IGDYVL). Disordered regions lie at residues 163–187 (PASR…YTRP) and 217–239 (QRTR…DPGR). 2 stretches are compositionally biased toward basic and acidic residues: residues 165–180 (SRHD…RRLE) and 217–226 (QRTRERRPEL).

Belongs to the RNA methyltransferase TrmD family. As to quaternary structure, homodimer.

It is found in the cytoplasm. The catalysed reaction is guanosine(37) in tRNA + S-adenosyl-L-methionine = N(1)-methylguanosine(37) in tRNA + S-adenosyl-L-homocysteine + H(+). In terms of biological role, specifically methylates guanosine-37 in various tRNAs. The polypeptide is tRNA (guanine-N(1)-)-methyltransferase (Mycolicibacterium paratuberculosis (strain ATCC BAA-968 / K-10) (Mycobacterium paratuberculosis)).